The sequence spans 389 residues: Phenylpropanoylacetyl-CoA synthase (389 aa).

Cysteine 163 is a catalytic residue.

Belongs to the thiolase-like superfamily. Chalcone/stilbene synthases family. In terms of assembly, homodimer. In terms of tissue distribution, expressed in both the leaf and rhizome, with higher expression in the rhizome.

The enzyme catalyses (E)-feruloyl-CoA + malonyl-CoA + H(+) = (E)-feruloylacetyl-CoA + CO2 + CoA. The catalysed reaction is 4-coumaroyl-CoA + malonyl-CoA + H(+) = (4-coumaroyl)acetyl-CoA + CO2 + CoA. Its pathway is secondary metabolite biosynthesis; flavonoid biosynthesis. Functionally, catalyzes the formation of feruloyldiketide-CoA by condensing feruloyl-CoA and malonyl-CoA in the curcuminoid biosynthesis. Has no activity with cinnamoyl-CoA. This Curcuma longa (Turmeric) protein is Phenylpropanoylacetyl-CoA synthase (DCS).